A 367-amino-acid chain; its full sequence is tRNA-specific 2-thiouridylase MnmA (367 aa).

ATP is bound by residues 12–19 and Met38; that span reads GMSGGVDS. The segment at 98-100 is interaction with target base in tRNA; sequence NPD. Cys103 acts as the Nucleophile in catalysis. Cys103 and Cys200 are joined by a disulfide. Residue Gly128 coordinates ATP. An interaction with tRNA region spans residues 150-152; the sequence is KDQ. The active-site Cysteine persulfide intermediate is the Cys200. Residues 312–313 are interaction with tRNA; the sequence is RY.

It belongs to the MnmA/TRMU family. As to quaternary structure, interacts with TusE.

The protein resides in the cytoplasm. The catalysed reaction is S-sulfanyl-L-cysteinyl-[protein] + uridine(34) in tRNA + AH2 + ATP = 2-thiouridine(34) in tRNA + L-cysteinyl-[protein] + A + AMP + diphosphate + H(+). Catalyzes the 2-thiolation of uridine at the wobble position (U34) of tRNA(Lys), tRNA(Glu) and tRNA(Gln), leading to the formation of s(2)U34, the first step of tRNA-mnm(5)s(2)U34 synthesis. Sulfur is provided by IscS, via a sulfur-relay system. Binds ATP and its substrate tRNAs. This Proteus mirabilis (strain HI4320) protein is tRNA-specific 2-thiouridylase MnmA.